A 270-amino-acid polypeptide reads, in one-letter code: Undecaprenyl-diphosphatase 1 (270 aa).

A run of 7 helical transmembrane segments spans residues 5-25, 42-62, 89-109, 117-137, 192-212, 220-240, and 250-270; these read YYVL…PIPI, IEGF…VLLI, FFFI…GVLF, LKGV…LWII, FSFL…ITDI, TLFV…YISL, and GNLK…LIFL.

It belongs to the UppP family.

Its subcellular location is the cell membrane. The catalysed reaction is di-trans,octa-cis-undecaprenyl diphosphate + H2O = di-trans,octa-cis-undecaprenyl phosphate + phosphate + H(+). Functionally, catalyzes the dephosphorylation of undecaprenyl diphosphate (UPP). Confers resistance to bacitracin. The polypeptide is Undecaprenyl-diphosphatase 1 (Bacillus cereus (strain ATCC 14579 / DSM 31 / CCUG 7414 / JCM 2152 / NBRC 15305 / NCIMB 9373 / NCTC 2599 / NRRL B-3711)).